A 153-amino-acid polypeptide reads, in one-letter code: Arginine regulator (153 aa).

Belongs to the ArgR family.

The protein localises to the cytoplasm. It participates in amino-acid degradation; L-arginine degradation via ADI pathway. In terms of biological role, regulates the transcription of the arc operon, involved in arginine catabolism. The protein is Arginine regulator (argR1) of Lactiplantibacillus plantarum (strain ATCC BAA-793 / NCIMB 8826 / WCFS1) (Lactobacillus plantarum).